The primary structure comprises 78 residues: Structural DNA-binding protein p10 (78 aa).

A compositionally biased stretch (low complexity) spans 1–27; that stretch reads MPTKAGTKSTANKKTTKGSSKSGSSRG. Residues 1-41 form a disordered region; the sequence is MPTKAGTKSTANKKTTKGSSKSGSSRGHTGKTHASSSMHSG.

Belongs to the asfivirus P10 family.

It localises to the virion. May play a role in genome packaging through direct interaction with viral DNA. Binds to ssDNA and dsDNA with the same apparent affinity in vitro. The protein is Structural DNA-binding protein p10 of African swine fever virus (strain Badajoz 1971 Vero-adapted) (Ba71V).